Reading from the N-terminus, the 460-residue chain is MAVSLWQQCIGRLQDELSAQQFSMWIRPLQAEMDGDTLVLYAPNRFVLDWVRDKYINIINQFFTEQMGNDAPKLRFDIGSRPSAKKPEPAPVAAVRVPNPQTKASVGTSFNTTEPVANTNHRSNINPTYQFDNFVEGKSNQLGKAAALQVAENPGGAYNPLFLYGGTGLGKTHLLHAVGNGIIKNNPNAKVVYMHSERFVQDMVKALQNNAIEEFKRYYRSVDALFIDDIQFFANKDRSQEEFFHTFNALLEGNHQIILTSDRYPKEIDGVEDRLKSRFGWGLTVAIEPPELETRVAILMRKAQESGINLPDEVAFFIAKRLRSNVRELEGALNRVIANANFTGRPITIDFVREALRDLLALQEKLVTIDNIQKTVAEYYKIKMADMLSKRRSRSVARPRQVAMALSKELTNQSLPEIGDAFGGRDHTTVLHACRKIAQLREESHDIKEDYANLIRTLSS.

The domain I, interacts with DnaA modulators stretch occupies residues 1-84 (MAVSLWQQCI…RFDIGSRPSA (84 aa)). The domain II stretch occupies residues 84-123 (AKKPEPAPVAAVRVPNPQTKASVGTSFNTTEPVANTNHRS). A disordered region spans residues 103–123 (KASVGTSFNTTEPVANTNHRS). Residues 124-340 (NINPTYQFDN…GALNRVIANA (217 aa)) are domain III, AAA+ region. Residues G168, G170, K171, and T172 each coordinate ATP. The segment at 341-460 (NFTGRPITID…YANLIRTLSS (120 aa)) is domain IV, binds dsDNA.

This sequence belongs to the DnaA family. As to quaternary structure, oligomerizes as a right-handed, spiral filament on DNA at oriC.

Its subcellular location is the cytoplasm. Functionally, plays an essential role in the initiation and regulation of chromosomal replication. ATP-DnaA binds to the origin of replication (oriC) to initiate formation of the DNA replication initiation complex once per cell cycle. Binds the DnaA box (a 9 base pair repeat at the origin) and separates the double-stranded (ds)DNA. Forms a right-handed helical filament on oriC DNA; dsDNA binds to the exterior of the filament while single-stranded (ss)DNA is stabiized in the filament's interior. The ATP-DnaA-oriC complex binds and stabilizes one strand of the AT-rich DNA unwinding element (DUE), permitting loading of DNA polymerase. After initiation quickly degrades to an ADP-DnaA complex that is not apt for DNA replication. Binds acidic phospholipids. The sequence is that of Chromosomal replication initiator protein DnaA from Shewanella sp. (strain MR-4).